Reading from the N-terminus, the 506-residue chain is Maturase K (506 aa).

The protein belongs to the intron maturase 2 family. MatK subfamily.

It is found in the plastid. Its subcellular location is the chloroplast. In terms of biological role, usually encoded in the trnK tRNA gene intron. Probably assists in splicing its own and other chloroplast group II introns. This chain is Maturase K, found in Jasminum nudiflorum (Winter jasmine).